Here is a 445-residue protein sequence, read N- to C-terminus: 23S rRNA (uracil(1939)-C(5))-methyltransferase RlmD (445 aa).

Positions 1 to 21 are disordered; that stretch reads MARRRKQLPETPEPASIETLS. The region spanning 5 to 64 is the TRAM domain; it reads RKQLPETPEPASIETLSHDGRGIARRDGKTTFIDNALPGEEVMFKFTYMRRKFDEGKAVE. Positions 77, 83, 86, and 165 each coordinate [4Fe-4S] cluster. S-adenosyl-L-methionine-binding residues include Gln275, Phe304, Asn309, Glu325, Asp352, and Asp373. The active-site Nucleophile is Cys399.

Belongs to the class I-like SAM-binding methyltransferase superfamily. RNA M5U methyltransferase family. RlmD subfamily.

It carries out the reaction uridine(1939) in 23S rRNA + S-adenosyl-L-methionine = 5-methyluridine(1939) in 23S rRNA + S-adenosyl-L-homocysteine + H(+). In terms of biological role, catalyzes the formation of 5-methyl-uridine at position 1939 (m5U1939) in 23S rRNA. This is 23S rRNA (uracil(1939)-C(5))-methyltransferase RlmD from Alcanivorax borkumensis (strain ATCC 700651 / DSM 11573 / NCIMB 13689 / SK2).